The chain runs to 836 residues: Conserved oligomeric Golgi complex subunit 7 (836 aa).

Coiled-coil stretches lie at residues glutamine 29–glutamate 49 and leucine 107–alanine 127. The disordered stretch occupies residues lysine 246–serine 265.

This sequence belongs to the COG7 family. In terms of assembly, component of the conserved oligomeric Golgi complex which is composed of eight different subunits and is required for normal Golgi morphology and localization. Interacts with COG5 and COG6.

It localises to the golgi apparatus membrane. Functionally, required for normal Golgi function. Necessary for embryo development and pigmentation, especially for the expansion of cells and organs, and for the formation of the organized shoot apical meristem (SAM). Probably involved in the generation of the extra-cellular matrix. This Arabidopsis thaliana (Mouse-ear cress) protein is Conserved oligomeric Golgi complex subunit 7.